Here is a 268-residue protein sequence, read N- to C-terminus: Microtubule-associated protein RP/EB family member 1 (268 aa).

A2 is subject to N-acetylalanine. Residues 14–116 form the Calponin-homology (CH) domain; it reads NLSRHDMLAW…FVQWFKKFFD (103 aa). K66 bears the N6-crotonyllysine mark. Y124 bears the Phosphotyrosine mark. Residues 124–268 are interaction with MTUS2/TIP150; the sequence is YDPVAARQGQ…GGPQEEQEEY (145 aa). The segment at 146 to 187 is disordered; sequence LNKPKKPLTSSSAAPQRPISTQRTAAAPKAGPGVVRKNPGVG. Residues 153 to 169 are compositionally biased toward polar residues; the sequence is LTSSSAAPQRPISTQRT. S155 and S165 each carry phosphoserine. Residues 185 to 255 form the EB1 C-terminal domain; that stretch reads GVGNGDDEAA…LYATDEGFVI (71 aa). The segment at 185-268 is interaction with CDK5RAP2; sequence GVGNGDDEAA…GGPQEEQEEY (84 aa). The interaction with APC stretch occupies residues 206–211; that stretch reads TVEDLE. Residues 208-268 form a DCTN1-binding region; sequence EDLEKERDFY…GGPQEEQEEY (61 aa). K220 carries the N6-acetyllysine modification. Residues 220-242 form an APC-binding region; the sequence is KLRNIELICQENEGENDPVLQRI. Positions 232–255 are interaction with SKA1; that stretch reads EGENDPVLQRIVDILYATDEGFVI.

It belongs to the MAPRE family. In terms of assembly, homodimer. Heterodimer with MAPRE3. Interacts with DCTN1, DCTN2, TERF1 and dynein intermediate chain. Interaction with DIAPH1 and DIAPH2. Interacts (via C-terminal residues 206-211) with APC (via C-terminal residues 2674-2843); the interaction inhibits association with and bundling of F-actin. Interacts with CLASP2, DST, KIF2C and STIM1; probably required for their targeting to the growing microtubule plus ends. Interacts with MTUS2; interaction is direct and probably targets MTUS2 to microtubules. Interacts (via C-terminus) with SKA1 (via SXIP motif); the interaction is direct and stabilizes the kinetochore-microtubule attachment of the SKA1 complex. Interacts with APC2. Interacts with CLASP1. Interacts with CDK5RAP2. Interacts with MACF1. Interacts with RABL2/RABL2A; binds preferentially to GTP-bound RABL2. Interacts with KCNAB2. Interacts (via C-terminus) with CLIP1. Interacts with SLAIN2 and SLAIN1. Interacts with KIF18B; this interaction is required for efficient accumulation of KIF18B at microtubule plus ends. Interacts with MISP. Interacts with KNSTRN. Interacts with NCKAP5L. Interacts with CAMSAP2. Interacts with PDE4DIP isoform 13/MMG8/SMYLE; this interaction is required for its recruitment to the Golgi apparatus. Forms a pericentrosomal complex with AKAP9, CDK5RAP2 and PDE4DIP isoform 13/MMG8/SMYLE; within this complex, MAPRE1 binding to CDK5RAP2 may be mediated by PDE4DIP. Interacts with AKNA. Interacts with GAS2L1, GAS2L2, and GAS2L3. Interacts with RARRES1 and AGBL2. In terms of processing, acetylation at Lys-220 by KAT2B/PCAF promotes dynamic kinetochore-microtubule interactions in early mitosis. Crotonylated by KAT5 during mitosis, promoting astral microtubule plasticity and dynamic connection between astral microtubules and the cortex during mitotic chromosome segregation, thereby ensuring accurate spindle positioning in mitosis. Decrotonylated by HDAC3. In terms of tissue distribution, ubiquitously expressed.

The protein localises to the cytoplasm. It localises to the cytoskeleton. The protein resides in the microtubule organizing center. Its subcellular location is the centrosome. It is found in the golgi apparatus. The protein localises to the spindle. It localises to the spindle pole. Functionally, plus-end tracking protein (+TIP) that binds to the plus-end of microtubules and regulates the dynamics of the microtubule cytoskeleton. Recruits other +TIP proteins to microtubules by binding to a conserved Ser-X-Leu-Pro (SXLP) motif in their polypeptide chains. Promotes cytoplasmic microtubule nucleation and elongation. Involved in mitotic spindle positioning by stabilizing microtubules and promoting dynamic connection between astral microtubules and the cortex during mitotic chromosome segregation. Assists chromosome alignment in metaphase by recruiting the SKA complex to the spindle and stabilizing its interactions with microtubule bundles (K-fibers). Also acts as a regulator of minus-end microtubule organization: interacts with the complex formed by AKAP9 and PDE4DIP, leading to recruit CAMSAP2 to the Golgi apparatus, thereby tethering non-centrosomal minus-end microtubules to the Golgi, an important step for polarized cell movement. Promotes elongation of CAMSAP2-decorated microtubule stretches on the minus-end of microtubules. Acts as a regulator of autophagosome transport via interaction with CAMSAP2. Functions downstream of Rho GTPases and DIAPH1 in stable microtubule formation. May play a role in cell migration. This chain is Microtubule-associated protein RP/EB family member 1, found in Homo sapiens (Human).